Reading from the N-terminus, the 84-residue chain is Putative membrane protein insertion efficiency factor (84 aa).

Belongs to the UPF0161 family.

It localises to the cell inner membrane. In terms of biological role, could be involved in insertion of integral membrane proteins into the membrane. In Shewanella loihica (strain ATCC BAA-1088 / PV-4), this protein is Putative membrane protein insertion efficiency factor.